Consider the following 216-residue polypeptide: Large ribosomal subunit protein uL3 (216 aa).

Glutamine 153 carries the post-translational modification N5-methylglutamine.

Belongs to the universal ribosomal protein uL3 family. In terms of assembly, part of the 50S ribosomal subunit. Forms a cluster with proteins L14 and L19. Post-translationally, methylated by PrmB.

In terms of biological role, one of the primary rRNA binding proteins, it binds directly near the 3'-end of the 23S rRNA, where it nucleates assembly of the 50S subunit. The chain is Large ribosomal subunit protein uL3 from Burkholderia ambifaria (strain MC40-6).